Here is a 131-residue protein sequence, read N- to C-terminus: Aspartate 1-decarboxylase (131 aa).

The active-site Schiff-base intermediate with substrate; via pyruvic acid is Ser25. Ser25 is subject to Pyruvic acid (Ser). A substrate-binding site is contributed by Thr57. Tyr58 functions as the Proton donor in the catalytic mechanism. 73-75 contacts substrate; the sequence is GAA.

Belongs to the PanD family. Heterooctamer of four alpha and four beta subunits. It depends on pyruvate as a cofactor. In terms of processing, is synthesized initially as an inactive proenzyme, which is activated by self-cleavage at a specific serine bond to produce a beta-subunit with a hydroxyl group at its C-terminus and an alpha-subunit with a pyruvoyl group at its N-terminus.

The protein resides in the cytoplasm. It carries out the reaction L-aspartate + H(+) = beta-alanine + CO2. Its pathway is cofactor biosynthesis; (R)-pantothenate biosynthesis; beta-alanine from L-aspartate: step 1/1. Catalyzes the pyruvoyl-dependent decarboxylation of aspartate to produce beta-alanine. The polypeptide is Aspartate 1-decarboxylase (Acaryochloris marina (strain MBIC 11017)).